The chain runs to 348 residues: SUMO-activating enzyme subunit 1 (348 aa).

Belongs to the ubiquitin-activating E1 family. As to quaternary structure, heterodimer of sae1 and uba2/sae2. The heterodimer corresponds to the two domains that are encoded on a single polypeptide chain in ubiquitin-activating enzyme E1. Interacts with ube2i.

It is found in the nucleus. It functions in the pathway protein modification; protein sumoylation. Its function is as follows. The heterodimer acts as an E1 ligase for sumo1, sumo2, and sumo3. It mediates ATP-dependent activation of sumo proteins followed by formation of a thioester bond between a sumo protein and a conserved active site cysteine residue on uba2/sae2. This chain is SUMO-activating enzyme subunit 1 (sae1), found in Danio rerio (Zebrafish).